The chain runs to 694 residues: Elongation factor G (694 aa).

Residues 8-287 (EDYRNFGIMA…AVVEFLPAPT (280 aa)) enclose the tr-type G domain. GTP contacts are provided by residues 17 to 24 (AHIDAGKT), 86 to 90 (DTPGH), and 140 to 143 (NKMD).

It belongs to the TRAFAC class translation factor GTPase superfamily. Classic translation factor GTPase family. EF-G/EF-2 subfamily.

The protein resides in the cytoplasm. Its function is as follows. Catalyzes the GTP-dependent ribosomal translocation step during translation elongation. During this step, the ribosome changes from the pre-translocational (PRE) to the post-translocational (POST) state as the newly formed A-site-bound peptidyl-tRNA and P-site-bound deacylated tRNA move to the P and E sites, respectively. Catalyzes the coordinated movement of the two tRNA molecules, the mRNA and conformational changes in the ribosome. The chain is Elongation factor G from Brucella anthropi (strain ATCC 49188 / DSM 6882 / CCUG 24695 / JCM 21032 / LMG 3331 / NBRC 15819 / NCTC 12168 / Alc 37) (Ochrobactrum anthropi).